The following is a 1302-amino-acid chain: MPEALILPGMADAEPDLSTFENKTGLAEDMKFLASMPELCDVTFLVGDTREPVCAVKAVLASRSRVFAKMLYAAPSPQRKRETSTKENKLRLFLKRSSEPLLNLQNAAQQRTGYTQQLAPIPEPSGQQHQTLIIEEFEPDVFRQLIEYIHTGCVTLQPRTLLGVMNAADYYGLEELRRACAGFVQCCINVDTVCALLASAERYIQYKCTKTLVQKVLEFVDEHGTEVLNLGSFTLLPQHVVRLILAREELRADEFTKFQAALMWSKKYYDNNPNIDIKEILGTFCEYIQFHKIPANVLMREIHPLNLVPYAIIMNALAYQADPESIDPGKLSPNSSRQHHRHRHHHQSLPKIRKAKSQSFRTRRSPSERRSPNNAPNLTLNTSLTSGNGEKKRSPLTPKSPVMPVPESKSPGSSSQKTPTSLSRQGTLRASNRRKNSGQLSISLGTQGRRSPVGLNDRSPQGRRSPLFPSSGLRSPNDPMTSPTVRSPTGEPRRSSPTFSVHTQERRSPLGAVAPTDFGCQFGVPGTRRSPTSTVHVQDMATEPEEAGFVGLKRPSISLFTPIYFASEKRSPMGPIPPITVSNPAETYKSAEREREAAEAAAREKEKEKEKEAAQPQEKKSVMREILAFVRKPSKHLSSRTNRFANAFTRAESGSSGGPLIRQSTFSASPAASSTAAKSAVQKQMSEVGFEPKISQKFTHYAKMSLRLRRSTKRDDEEKEKQKQSSASGSKRPSADLSQTNADQQVGGSSDELPFELANVHFEKVGESYIKHERLRELQEPEVVKEEDTEKDAEAEVEVEQTDAAMAQFVEEVTNSLKVVALNGEGGTAAVHHFTRRSESREPIEPRISEERESDSNDLMIPDDMRAELVEILKAYPPEPVYVNLQALRRETEDADLAIAQAEAAALAAAEPAKKPLQCPTIEFEPPSRRSSFDPPRSPFLEQLRSPGVDTETDLINLQRLDSGGDSFELVESKWSKSSRGESSFDCPYSSRDTSFDVSISRYQSTSYEDQTSSFEIVDTDEKGQGRRAVDLRKSSIELVDAETFQRSGSSCGGRKSSLETHFDYTPTEGGGRSPSLPFPAMSKKQRTENFRQLHVSQFSAFSRARSPLSQQTSSNYSSRDSYDSSGSYPHGYGYPPEPQRSPYGDPSRKHFPLTVRQKGEEEREVRTFLCTDQRCASIFEPRPSSVLTQQLSTGSMSTPSGYTNGTPRIPGAAPVGPVPLPHPSAPLSSCGFSSGSEFEPPSPRRAASASPKHTFTFRIVMKKVDSSPEALCPERHRSRIIDRYRRRDSRRKRIHDAGKSF.

A BTB domain is found at 40 to 158 (CDVTFLVGDT…IHTGCVTLQP (119 aa)). Disordered stretches follow at residues 325–532 (SIDP…RSPT), 575–624 (PIPP…SVMR), 648–685 (FTRAESGSSGGPLIRQSTFSASPAASSTAAKSAVQKQM), 701–752 (YAKM…SSDE), 834–858 (FTRRSESREPIEPRISEERESDSND), 1045–1090 (FQRS…RTEN), 1102–1163 (FSRA…GEEE), and 1187–1252 (VLTQ…SASP). Residues 337–364 (RQHHRHRHHHQSLPKIRKAKSQSFRTRR) show a composition bias toward basic residues. Composition is skewed to polar residues over residues 378–388 (LTLNTSLTSGN), 410–430 (SPGSSSQKTPTSLSRQGTLRA), 437–449 (SGQLSISLGTQGR), and 472–487 (GLRSPNDPMTSPTVRS). Positions 589-623 (KSAEREREAAEAAAREKEKEKEKEAAQPQEKKSVM) are enriched in basic and acidic residues. Residues 664 to 680 (STFSASPAASSTAAKSA) show a composition bias toward low complexity. The segment covering 713-723 (KRDDEEKEKQK) has biased composition (basic and acidic residues). The span at 736–748 (DLSQTNADQQVGG) shows a compositional bias: polar residues. A compositionally biased stretch (basic and acidic residues) spans 836-855 (RRSESREPIEPRISEERESD). Composition is skewed to low complexity over residues 1047–1056 (RSGSSCGGRK) and 1107–1128 (SPLSQQTSSNYSSRDSYDSSGS). The segment covering 1187–1207 (VLTQQLSTGSMSTPSGYTNGT) has biased composition (polar residues). The span at 1226 to 1252 (APLSSCGFSSGSEFEPPSPRRAASASP) shows a compositional bias: low complexity.

This is Serine-enriched protein (gprs) from Drosophila melanogaster (Fruit fly).